Consider the following 287-residue polypeptide: Acetylglutamate kinase (287 aa).

Substrate contacts are provided by residues 70 to 71, arginine 92, and asparagine 184; that span reads GG.

It belongs to the acetylglutamate kinase family. ArgB subfamily.

Its subcellular location is the cytoplasm. The enzyme catalyses N-acetyl-L-glutamate + ATP = N-acetyl-L-glutamyl 5-phosphate + ADP. It functions in the pathway amino-acid biosynthesis; L-arginine biosynthesis; N(2)-acetyl-L-ornithine from L-glutamate: step 2/4. In terms of biological role, catalyzes the ATP-dependent phosphorylation of N-acetyl-L-glutamate. This is Acetylglutamate kinase from Dinoroseobacter shibae (strain DSM 16493 / NCIMB 14021 / DFL 12).